Here is a 152-residue protein sequence, read N- to C-terminus: MIPTRCNEINGSRPSSLKLAGESHTIKKTSSCKSKPRPHGRASPVIIYAHSPKVIHTRAEDFMALVQRLTGLDEIIRRNTSESSSSVVTEEVNVGDDNTAAPFSQDRTQRQKLTDMPLFTPSSMTLFGSPTQLMYMSPNRTDSFRPLVFKSE.

The tract at residues 1–42 (MIPTRCNEINGSRPSSLKLAGESHTIKKTSSCKSKPRPHGRA) is disordered. A chloroplast-targeting transit peptide spans 1 to 58 (MIPTRCNEINGSRPSSLKLAGESHTIKKTSSCKSKPRPHGRASPVIIYAHSPKVIHTR). A VQ motif is present at residues 62–71 (FMALVQRLTG). The interval 80–108 (TSESSSSVVTEEVNVGDDNTAAPFSQDRT) is disordered. Low complexity predominate over residues 81–92 (SESSSSVVTEEV).

The protein localises to the plastid. The protein resides in the chloroplast. In terms of biological role, may be involved in chloroplast development. This is VQ motif-containing protein 8, chloroplastic from Arabidopsis thaliana (Mouse-ear cress).